The sequence spans 98 residues: NADH-ubiquinone oxidoreductase chain 4L (98 aa).

3 helical membrane passes run 1 to 21, 29 to 49, and 59 to 79; these read MLPI…GVLI, TLLC…LMIT, and IPLI…ALLV.

The protein belongs to the complex I subunit 4L family. As to quaternary structure, core subunit of respiratory chain NADH dehydrogenase (Complex I) which is composed of 45 different subunits.

The protein localises to the mitochondrion inner membrane. The catalysed reaction is a ubiquinone + NADH + 5 H(+)(in) = a ubiquinol + NAD(+) + 4 H(+)(out). Core subunit of the mitochondrial membrane respiratory chain NADH dehydrogenase (Complex I) which catalyzes electron transfer from NADH through the respiratory chain, using ubiquinone as an electron acceptor. Part of the enzyme membrane arm which is embedded in the lipid bilayer and involved in proton translocation. The chain is NADH-ubiquinone oxidoreductase chain 4L (MT-ND4L) from Phascogale tapoatafa (Common wambenger).